We begin with the raw amino-acid sequence, 284 residues long: MQLDPKGWFTEVCKEGGLAFSLAIREKLHAETTPYQYIEIYQTETFGRLMVIDGFIMLSGRDNFFYHEMMAHPVLFTHPHPQRVLIIGGGDCGTLREVLKHDVVEKVQQVEIDERVTRLAEKYFPELCQSNDDPRAHFHFGDGLRFVAEAPANSVDVIIIDSTDPIGSAEGLFQASFYADCQRLLGEKGILVHQSESPLIHLDLLNKMRAEMKKGGFPQVRTLTYPQCVYPSGWWSATLAGHTLSCFRERDATAKIFPTRYYNVDIHRASLAVPEFLRQTEESS.

The PABS domain occupies Lys-6–His-242. Gln-36 lines the S-methyl-5'-thioadenosine pocket. His-67 and Asp-91 together coordinate spermidine. Residues Glu-111 and Asp-142–Gly-143 contribute to the S-methyl-5'-thioadenosine site. Catalysis depends on Asp-161, which acts as the Proton acceptor. A spermidine-binding site is contributed by Asp-161–Asp-164.

It belongs to the spermidine/spermine synthase family. In terms of assembly, homodimer or homotetramer.

It is found in the cytoplasm. It carries out the reaction S-adenosyl 3-(methylsulfanyl)propylamine + putrescine = S-methyl-5'-thioadenosine + spermidine + H(+). It functions in the pathway amine and polyamine biosynthesis; spermidine biosynthesis; spermidine from putrescine: step 1/1. Catalyzes the irreversible transfer of a propylamine group from the amino donor S-adenosylmethioninamine (decarboxy-AdoMet) to putrescine (1,4-diaminobutane) to yield spermidine. The sequence is that of Polyamine aminopropyltransferase from Nitrosococcus oceani (strain ATCC 19707 / BCRC 17464 / JCM 30415 / NCIMB 11848 / C-107).